We begin with the raw amino-acid sequence, 876 residues long: Alanine--tRNA ligase (876 aa).

The Zn(2+) site is built by histidine 565, histidine 569, cysteine 667, and histidine 671.

It belongs to the class-II aminoacyl-tRNA synthetase family. Zn(2+) is required as a cofactor.

It is found in the cytoplasm. The enzyme catalyses tRNA(Ala) + L-alanine + ATP = L-alanyl-tRNA(Ala) + AMP + diphosphate. Functionally, catalyzes the attachment of alanine to tRNA(Ala) in a two-step reaction: alanine is first activated by ATP to form Ala-AMP and then transferred to the acceptor end of tRNA(Ala). Also edits incorrectly charged Ser-tRNA(Ala) and Gly-tRNA(Ala) via its editing domain. This Staphylococcus aureus (strain MSSA476) protein is Alanine--tRNA ligase.